The sequence spans 615 residues: Chaperone protein HscA (615 aa).

Belongs to the heat shock protein 70 family.

Chaperone involved in the maturation of iron-sulfur cluster-containing proteins. Has a low intrinsic ATPase activity which is markedly stimulated by HscB. Involved in the maturation of IscU. The chain is Chaperone protein HscA from Xenorhabdus nematophila (strain ATCC 19061 / DSM 3370 / CCUG 14189 / LMG 1036 / NCIMB 9965 / AN6).